We begin with the raw amino-acid sequence, 176 residues long: Large ribosomal subunit protein bL28m (176 aa).

The transit peptide at 1–8 directs the protein to the mitochondrion; it reads MASKLLRK.

This sequence belongs to the bacterial ribosomal protein bL28 family. Component of the mitochondrial large ribosomal subunit (mt-LSU). Mature yeast 74S mitochondrial ribosomes consist of a small (37S) and a large (54S) subunit. The 37S small subunit contains a 15S ribosomal RNA (15S mt-rRNA) and at least 32 different proteins. The 54S large subunit contains a 21S rRNA (21S mt-rRNA) and at least 45 different proteins.

It is found in the cytoplasm. The protein resides in the mitochondrion. Functionally, component of the mitochondrial ribosome (mitoribosome), a dedicated translation machinery responsible for the synthesis of mitochondrial genome-encoded proteins, including at least some of the essential transmembrane subunits of the mitochondrial respiratory chain. The mitoribosomes are attached to the mitochondrial inner membrane and translation products are cotranslationally integrated into the membrane. The polypeptide is Large ribosomal subunit protein bL28m (mrpl24) (Schizosaccharomyces pombe (strain 972 / ATCC 24843) (Fission yeast)).